A 180-amino-acid chain; its full sequence is Molybdopterin synthase catalytic subunit (180 aa).

A compositionally biased stretch (polar residues) spans 1-10 (MSSTTPTTEP). The disordered stretch occupies residues 1 to 31 (MSSTTPTTEPDQLPPHLDPQTYPRTTTNPTL). A compositionally biased stretch (low complexity) spans 21–31 (TYPRTTTNPTL). Substrate contacts are provided by residues 131–132 (HR), K147, and 154–156 (KKE).

It belongs to the MoaE family. MOCS2B subfamily. In terms of assembly, heterotetramer; composed of 2 small (MOCS2A) and 2 large (MOCS2B) subunits.

The protein localises to the cytoplasm. The enzyme catalyses 2 [molybdopterin-synthase sulfur-carrier protein]-C-terminal-Gly-aminoethanethioate + cyclic pyranopterin phosphate + H2O = molybdopterin + 2 [molybdopterin-synthase sulfur-carrier protein]-C-terminal Gly-Gly + 2 H(+). It functions in the pathway cofactor biosynthesis; molybdopterin biosynthesis. Functionally, catalytic subunit of the molybdopterin synthase complex, a complex that catalyzes the conversion of precursor Z into molybdopterin. Acts by mediating the incorporation of 2 sulfur atoms from thiocarboxylated MOCS2A into precursor Z to generate a dithiolene group. In Aspergillus niger (strain ATCC MYA-4892 / CBS 513.88 / FGSC A1513), this protein is Molybdopterin synthase catalytic subunit.